The primary structure comprises 396 residues: E3 ubiquitin-protein transferase MAEA (396 aa).

Positions 121 to 153 (KKKRMDRMMVEHLLRCGYYNTAVKLARQSGIED) constitute a LisH domain. The 58-residue stretch at 159 to 216 (MFLTAKEVEESLERQETATCLAWCHDNKSRLRKMKSCLEFSLRIQEFIELIRQNKRMD) folds into the CTLH domain. The RING-Gid-type zinc finger occupies 314-381 (CPVCSKSLNK…QDDKVICPRT (68 aa)).

As to quaternary structure, identified in the CTLH complex that contains at least MAEA, RMND5A, GID8, WDR26, and RANBP9 and/or RANBP10 as the catalytic core. Interacts with F-actin.

It is found in the nucleus matrix. The protein localises to the cell membrane. Its subcellular location is the cytoplasm. The protein resides in the cytoskeleton. It catalyses the reaction S-ubiquitinyl-[E2 ubiquitin-conjugating enzyme]-L-cysteine + [acceptor protein]-L-lysine = [E2 ubiquitin-conjugating enzyme]-L-cysteine + N(6)-ubiquitinyl-[acceptor protein]-L-lysine.. In terms of biological role, core component of the CTLH E3 ubiquitin-protein ligase complex that selectively accepts ubiquitin from UBE2H and mediates ubiquitination and subsequent proteasomal degradation of the transcription factor HBP1. MAEA and RMND5A are both required for catalytic activity of the CTLH E3 ubiquitin-protein ligase complex. MAEA is required for normal cell proliferation. The CTLH E3 ubiquitin-protein ligase complex is not required for the degradation of enzymes involved in gluconeogenesis, such as FBP1. Plays a role in erythroblast maturation and in the development of mature macrophages. Mediates the attachment of erythroid cell to mature macrophages; this MAEA-mediated contact inhibits erythroid cell apoptosis. Participates in erythroblastic island formation, which is the functional unit of definitive erythropoiesis. Associates with F-actin to regulate actin distribution in erythroblasts and macrophages. May contribute to nuclear architecture and cells division events. The polypeptide is E3 ubiquitin-protein transferase MAEA (maea) (Danio rerio (Zebrafish)).